We begin with the raw amino-acid sequence, 369 residues long: Cobalt-precorrin-5B C(1)-methyltransferase (369 aa).

The protein belongs to the CbiD family.

The enzyme catalyses Co-precorrin-5B + S-adenosyl-L-methionine = Co-precorrin-6A + S-adenosyl-L-homocysteine. It functions in the pathway cofactor biosynthesis; adenosylcobalamin biosynthesis; cob(II)yrinate a,c-diamide from sirohydrochlorin (anaerobic route): step 6/10. In terms of biological role, catalyzes the methylation of C-1 in cobalt-precorrin-5B to form cobalt-precorrin-6A. This Brucella melitensis biotype 2 (strain ATCC 23457) protein is Cobalt-precorrin-5B C(1)-methyltransferase.